The following is a 287-amino-acid chain: Polyamine aminopropyltransferase (287 aa).

The region spanning 5-238 (EIWYETLHAN…GIMTFAWASN (234 aa)) is the PABS domain. Position 33 (Gln33) interacts with S-methyl-5'-thioadenosine. Residues His64 and Asp88 each coordinate spermidine. S-methyl-5'-thioadenosine contacts are provided by residues Glu108 and 140–141 (DG). Asp158 serves as the catalytic Proton acceptor. 158–161 (DCTD) contributes to the spermidine binding site. An S-methyl-5'-thioadenosine-binding site is contributed by Pro165.

This sequence belongs to the spermidine/spermine synthase family. As to quaternary structure, homodimer or homotetramer.

It localises to the cytoplasm. The enzyme catalyses S-adenosyl 3-(methylsulfanyl)propylamine + putrescine = S-methyl-5'-thioadenosine + spermidine + H(+). Its pathway is amine and polyamine biosynthesis; spermidine biosynthesis; spermidine from putrescine: step 1/1. In terms of biological role, catalyzes the irreversible transfer of a propylamine group from the amino donor S-adenosylmethioninamine (decarboxy-AdoMet) to putrescine (1,4-diaminobutane) to yield spermidine. The sequence is that of Polyamine aminopropyltransferase from Pectobacterium carotovorum subsp. carotovorum (strain PC1).